We begin with the raw amino-acid sequence, 109 residues long: Nucleoid-associated protein PM0205 (109 aa).

Belongs to the YbaB/EbfC family. As to quaternary structure, homodimer.

It localises to the cytoplasm. It is found in the nucleoid. Its function is as follows. Binds to DNA and alters its conformation. May be involved in regulation of gene expression, nucleoid organization and DNA protection. The sequence is that of Nucleoid-associated protein PM0205 from Pasteurella multocida (strain Pm70).